The primary structure comprises 214 residues: Cytochrome c biogenesis ATP-binding export protein CcmA (214 aa).

In terms of domain architecture, ABC transporter spans 12–214; it reads LAAHALAFSR…TRMLTLEAAA (203 aa). Position 44 to 51 (44 to 51) interacts with ATP; the sequence is GDNGAGKT.

It belongs to the ABC transporter superfamily. CcmA exporter (TC 3.A.1.107) family. In terms of assembly, the complex is composed of two ATP-binding proteins (CcmA) and two transmembrane proteins (CcmB).

Its subcellular location is the cell inner membrane. The catalysed reaction is heme b(in) + ATP + H2O = heme b(out) + ADP + phosphate + H(+). In terms of biological role, part of the ABC transporter complex CcmAB involved in the biogenesis of c-type cytochromes; once thought to export heme, this seems not to be the case, but its exact role is uncertain. Responsible for energy coupling to the transport system. This Xanthomonas oryzae pv. oryzae (strain MAFF 311018) protein is Cytochrome c biogenesis ATP-binding export protein CcmA.